Here is a 293-residue protein sequence, read N- to C-terminus: Protein transport protein yif1 (293 aa).

Topologically, residues 1–139 (MPPKLYHPQP…PPAEDLNSPD (139 aa)) are cytoplasmic. A helical membrane pass occupies residues 140 to 160 (MYIPLMAFTTHILLLCALAGL). Over 161 to 175 (QDDFQPELFGLRASK) the chain is Lumenal. The helical transmembrane segment at 176-196 (ACAVVLVEFLATRLGCYLLNI) threads the bilayer. Residues 197–201 (SSQSQ) lie on the Cytoplasmic side of the membrane. The chain crosses the membrane as a helical span at residues 202–222 (VLDLLAFSGYKFVGLILTSLS). Residues 223–226 (KLFE) lie on the Lumenal side of the membrane. A helical membrane pass occupies residues 227–247 (MPWVTRFVFLYMYLATAFFLL). Over 248 to 271 (RSLKYAVLPESTMAINATITSHQR) the chain is Cytoplasmic. Residues 272-292 (SRRIYFLFFIAASQILFMYVL) traverse the membrane as a helical segment. S293 is a topological domain (lumenal).

Belongs to the YIF1 family. In terms of assembly, component of the yip1-yif1 complex, composed of at least yif1, yip1 and yos1. The complex interacts with the ER to Golgi SNAREs bos1 and sec22.

It localises to the endoplasmic reticulum membrane. The protein resides in the golgi apparatus membrane. The protein localises to the cytoplasmic vesicle. Its subcellular location is the COPII-coated vesicle. Functionally, required for fusion of ER-derived vesicles with the Golgi during ER-to-Golgi protein transport. May be involved in proper membrane localization of Rab GTPases. This chain is Protein transport protein yif1, found in Schizosaccharomyces pombe (strain 972 / ATCC 24843) (Fission yeast).